Here is a 466-residue protein sequence, read N- to C-terminus: RuvB-like helicase 2 (466 aa).

74 to 81 (GPPSTGKT) is an ATP binding site.

It belongs to the RuvB family. In terms of assembly, may form heterododecamers with RVB1. Component of the SWR1 chromatin remodeling complex, the INO80 chromatin remodeling complex, and of the R2TP complex.

Its subcellular location is the nucleus. The enzyme catalyses ATP + H2O = ADP + phosphate + H(+). Functionally, DNA helicase which participates in several chromatin remodeling complexes, including the SWR1 and the INO80 complexes. The SWR1 complex mediates the ATP-dependent exchange of histone H2A for the H2A variant HZT1 leading to transcriptional regulation of selected genes by chromatin remodeling. The INO80 complex remodels chromatin by shifting nucleosomes and is involved in DNA repair. Also involved in pre-rRNA processing. In Yarrowia lipolytica (strain CLIB 122 / E 150) (Yeast), this protein is RuvB-like helicase 2 (RVB2).